A 101-amino-acid polypeptide reads, in one-letter code: uncharacterized protein (101 aa).

It is found in the plastid. The protein localises to the chloroplast. This is an uncharacterized protein from Chlamydomonas reinhardtii (Chlamydomonas smithii).